Reading from the N-terminus, the 197-residue chain is MSLGRLCRLLKPALLCGALAAPGLAGTMCASQDDWRSARSMHEFSAKDIDGHTVNLDKYRGFVCIVTNVASQUGKTQVNYTQLVDLHARYAECGLRILAFPCNQFGKQEPGSNEEIKEFAAGYNVKFDMFSKICVNGDDAHPLWKWMKIQPKGKGTLGNAIKWNFTKFLVDKNGCVVKRYGPMEEPQVIEKDLPCYF.

The residue at position 40 (Ser40) is a Phosphoserine. The active site involves Sec73. Position 73 (Sec73) is a non-standard amino acid, selenocysteine.

It belongs to the glutathione peroxidase family. In terms of assembly, monomer. Has a tendency to form higher mass oligomers. Interacts with FUNDC1; this interaction promotes GPX4 recruitment into mitochondria through TOM/TIM complex where it is degraded by mitophagy. As to expression, expressed in testis. Also expressed in liver, lung, kidney and spinal cord.

The protein resides in the mitochondrion. Its subcellular location is the cytoplasm. It carries out the reaction a hydroperoxy polyunsaturated fatty acid + 2 glutathione = a hydroxy polyunsaturated fatty acid + glutathione disulfide + H2O. The enzyme catalyses 2 glutathione + H2O2 = glutathione disulfide + 2 H2O. It catalyses the reaction tert-butyl hydroperoxide + 2 glutathione = tert-butanol + glutathione disulfide + H2O. The catalysed reaction is cumene hydroperoxide + 2 glutathione = 2-phenylpropan-2-ol + glutathione disulfide + H2O. It carries out the reaction (9S)-hydroperoxy-(10E,12Z)-octadecadienoate + 2 glutathione = (9S)-hydroxy-(10E,12Z)-octadecadienoate + glutathione disulfide + H2O. The enzyme catalyses (13S)-hydroperoxy-(9Z,11E)-octadecadienoate + 2 glutathione = (13S)-hydroxy-(9Z,11E)-octadecadienoate + glutathione disulfide + H2O. It catalyses the reaction (5S)-hydroperoxy-(6E,8Z,11Z,14Z)-eicosatetraenoate + 2 glutathione = (5S)-hydroxy-(6E,8Z,11Z,14Z)-eicosatetraenoate + glutathione disulfide + H2O. The catalysed reaction is (12R)-hydroperoxy-(5Z,8Z,10E,14Z)-eicosatetraenoate + 2 glutathione = (12R)-hydroxy-(5Z,8Z,10E,14Z)-eicosatetraenoate + glutathione disulfide + H2O. It carries out the reaction (12S)-hydroperoxy-(5Z,8Z,10E,14Z)-eicosatetraenoate + 2 glutathione = (12S)-hydroxy-(5Z,8Z,10E,14Z)-eicosatetraenoate + glutathione disulfide + H2O. The enzyme catalyses (15S)-hydroperoxy-(5Z,8Z,11Z,13E)-eicosatetraenoate + 2 glutathione = (15S)-hydroxy-(5Z,8Z,11Z,13E)-eicosatetraenoate + glutathione disulfide + H2O. It catalyses the reaction (5S)-hydroperoxy-(6E,8Z,11Z,14Z,17Z)-eicosapentaenoate + 2 glutathione = (5S)-hydroxy-(6E,8Z,11Z,14Z,17Z)-eicosapentaenoate + glutathione disulfide + H2O. The catalysed reaction is (12S)-hydroperoxy-(5Z,8Z,10E,14Z,17Z)-eicosapentaenoate + 2 glutathione = (12S)-hydroxy-(5Z,8Z,10E,14Z,17Z)-eicosapentaenoate + glutathione disulfide + H2O. It carries out the reaction (15S)-hydroperoxy-(5Z,8Z,11Z,13E,17Z)-eicosapentaenoate + 2 glutathione = (15S)-hydroxy-(5Z,8Z,11Z,13E,17Z)-eicosapentaenoate + glutathione disulfide + H2O. The enzyme catalyses (15S)-hydroperoxy-(11Z,13E)-eicosadienoate + 2 glutathione = (15S)-hydroxy-(11Z,13E)-eicosadienoate + glutathione disulfide + H2O. It catalyses the reaction (17S)-hydroperoxy-(4Z,7Z,10Z,13Z,15E,19Z)-docosahexaenoate + 2 glutathione = (17S)-hydroxy-(4Z,7Z,10Z,13Z,15E,19Z)-docosahexaenoate + glutathione disulfide + H2O. The catalysed reaction is a hydroperoxy-1,2-diacyl-glycero-3-phosphocholine + 2 glutathione = a hydroxy-1,2-diacyl-glycero-3-phosphocholine + glutathione disulfide + H2O. In terms of biological role, essential antioxidant peroxidase that directly reduces phospholipid hydroperoxide even if they are incorporated in membranes and lipoproteins. Can also reduce fatty acid hydroperoxide, cholesterol hydroperoxide and thymine hydroperoxide. Plays a key role in protecting cells from oxidative damage by preventing membrane lipid peroxidation. Required to prevent cells from ferroptosis, a non-apoptotic cell death resulting from an iron-dependent accumulation of lipid reactive oxygen species. The presence of selenocysteine (Sec) versus Cys at the active site is essential for life: it provides resistance to overoxidation and prevents cells against ferroptosis. The presence of Sec at the active site is also essential for the survival of a specific type of parvalbumin-positive interneurons, thereby preventing against fatal epileptic seizures. May be required to protect cells from the toxicity of ingested lipid hydroperoxides. Required for normal sperm development and male fertility. Essential for maturation and survival of photoreceptor cells. Plays a role in a primary T-cell response to viral and parasitic infection by protecting T-cells from ferroptosis and by supporting T-cell expansion. Plays a role of glutathione peroxidase in platelets in the arachidonic acid metabolism. Reduces hydroperoxy ester lipids formed by a 15-lipoxygenase that may play a role as down-regulator of the cellular 15-lipoxygenase pathway. Can also reduce small soluble hydroperoxides such as H2O2, cumene hydroperoxide and tert-butyl hydroperoxide. This chain is Phospholipid hydroperoxide glutathione peroxidase, found in Callithrix jacchus (White-tufted-ear marmoset).